Reading from the N-terminus, the 531-residue chain is T-complex protein 1 subunit zeta-2 (531 aa).

This sequence belongs to the TCP-1 chaperonin family. In terms of assembly, component of the chaperonin-containing T-complex (TRiC), a heterooligomeric complex of about 850 to 900 kDa that forms two stacked rings, 12 to 16 nm in diameter. As to expression, testis specific.

It localises to the cytoplasm. Component of the chaperonin-containing T-complex (TRiC), a molecular chaperone complex that assists the folding of proteins upon ATP hydrolysis. This chain is T-complex protein 1 subunit zeta-2 (Cct6b), found in Mus musculus (Mouse).